A 157-amino-acid chain; its full sequence is Cytochrome c-type biogenesis protein CcmE (157 aa).

Residues 1–7 (MTPRQRR) lie on the Cytoplasmic side of the membrane. Residues 8-28 (LGLLAAALACCGVAAALVLNA) form a helical; Signal-anchor for type II membrane protein membrane-spanning segment. Residues 29-157 (FRANLVFFFS…GAMAAQELRR (129 aa)) are Periplasmic-facing. Heme-binding residues include His123 and Tyr127.

Belongs to the CcmE/CycJ family.

It is found in the cell inner membrane. Its function is as follows. Heme chaperone required for the biogenesis of c-type cytochromes. Transiently binds heme delivered by CcmC and transfers the heme to apo-cytochromes in a process facilitated by CcmF and CcmH. The chain is Cytochrome c-type biogenesis protein CcmE from Cupriavidus taiwanensis (strain DSM 17343 / BCRC 17206 / CCUG 44338 / CIP 107171 / LMG 19424 / R1) (Ralstonia taiwanensis (strain LMG 19424)).